A 428-amino-acid chain; its full sequence is Adenylosuccinate synthetase (428 aa).

Residues 12–18 and 40–42 contribute to the GTP site; these read GDEGKGK and GHS. Residue aspartate 13 is the Proton acceptor of the active site. 2 residues coordinate Mg(2+): aspartate 13 and glycine 40. IMP-binding positions include 13-16, 38-41, threonine 128, arginine 142, glutamine 223, threonine 238, and arginine 302; these read DEGK and NAGH. Residue histidine 41 is the Proton donor of the active site. A substrate-binding site is contributed by 298–304; that stretch reads VTTGRPR. GTP-binding positions include arginine 304, 330-332, and 412-414; these read KLD and GTG.

Belongs to the adenylosuccinate synthetase family. In terms of assembly, homodimer. The cofactor is Mg(2+).

The protein localises to the cytoplasm. The enzyme catalyses IMP + L-aspartate + GTP = N(6)-(1,2-dicarboxyethyl)-AMP + GDP + phosphate + 2 H(+). Its pathway is purine metabolism; AMP biosynthesis via de novo pathway; AMP from IMP: step 1/2. Functionally, plays an important role in the de novo pathway of purine nucleotide biosynthesis. Catalyzes the first committed step in the biosynthesis of AMP from IMP. The protein is Adenylosuccinate synthetase of Bifidobacterium longum (strain DJO10A).